A 287-amino-acid polypeptide reads, in one-letter code: Festuclavine synthase I (287 aa).

Belongs to the fgaFS/easG family.

It catalyses the reaction festuclavine + NAD(+) = 6,8-dimethyl-6,7-didehydroergoline + NADH + H(+). It functions in the pathway alkaloid biosynthesis; ergot alkaloid biosynthesis. Functionally, festuclavine synthase; part of the gene cluster that mediates the biosynthesis of isofumigaclavines, fungal ergot alkaloids. The tryptophan dimethylallyltransferase ifgA catalyzes the first step of ergot alkaloid biosynthesis by condensing dimethylallyl diphosphate (DMAP) and tryptophan to form 4-dimethylallyl-L-tryptophan. The second step is catalyzed by the methyltransferase ifgB that methylates 4-dimethylallyl-L-tryptophan in the presence of S-adenosyl-L-methionine, resulting in the formation of N-methyl-dimethylallyl-L-tryptophan. The catalase ifgD and the FAD-dependent oxidoreductase ifgC then transform N-methyl-dimethylallyl-L-tryptophan to chanoclavine-I which is further oxidized by ifgE in the presence of NAD(+), resulting in the formation of chanoclavine-I aldehyde. The chanoclavine-I aldehyde reductases ifgG and/or fgaOx3 reduce chanoclavine-I aldehyde to dihydrochanoclavine-I aldehyde that spontaneously dehydrates to form 6,8-dimethyl-6,7-didehydroergoline. The festuclavine dehydrogenases ifgF1 and/or ifgF2 then catalyze the reduction of 6,8-dimethyl-6,7-didehydroergoline to form festuclavine. Hydrolysis of festuclavine by a yet undetermined cytochrome P450 monooxygenase (called ifgH) then leads to the formation of isofumigaclavine B which is in turn acetylated by ifgI to isofumigaclavine A. Penicillium roqueforti has interestingly at least two sets of genes for the consumption of chanoclavine-I aldehyde on three different loci, the OYEs ifgG/fgaOx3 and the festuclavine synthase homologs ifgF1/ifgF2. The reason for the duplication of these genes is unclear, probably to ensure the conversion of chanoclavine-I aldehyde by differential gene expression under various environmental conditions. This Penicillium roqueforti (strain FM164) protein is Festuclavine synthase I.